A 471-amino-acid polypeptide reads, in one-letter code: MKLPKTIGLVHFIGIGGIGMSGIAEVLHNLGHKVQGSDQADSANVQRLRDKGIEVFVGHRAENLGEAEVVVVSTAIKKSNPELIAAREKLLPVVRRAEMLAELMRFRNAIAIGGTHGKTTTTSLVATLLEAGGLDPTVINGGIINAYGTNARMGEGEWMVVEADESDGTFLKLPADVAVITNIDPEHLDHYGNFDAVRAAFRQFVENVPFYGFGVMCLDHPEVQSLVGRIEDRKIITYGENPQADVRFKNVRIDGTRSIFDVEIRRRRTGQVIELKGLVMPMPGRHNISNATAAIAVANRLGISSADIAKGLASFGGVKRRFTLTGEWNGVQIFDDYGHHPVEIKAVLRAARESCKGRVIAVHQPHRFSRLASLFEEFAACFNDADSIFLAPVYAAGEDPIEGIDSVSLVSRIKSGGHRDARFLTSAEFLPQMVAEVAKPGDFVVLLGAGSITSWAAALPKQLEGLSGKSV.

114-120 is a binding site for ATP; the sequence is GTHGKTT.

This sequence belongs to the MurCDEF family.

The protein localises to the cytoplasm. It carries out the reaction UDP-N-acetyl-alpha-D-muramate + L-alanine + ATP = UDP-N-acetyl-alpha-D-muramoyl-L-alanine + ADP + phosphate + H(+). It functions in the pathway cell wall biogenesis; peptidoglycan biosynthesis. In terms of biological role, cell wall formation. This Rhizobium johnstonii (strain DSM 114642 / LMG 32736 / 3841) (Rhizobium leguminosarum bv. viciae) protein is UDP-N-acetylmuramate--L-alanine ligase.